We begin with the raw amino-acid sequence, 427 residues long: Trigger factor (427 aa).

A PPIase FKBP-type domain is found at 163–248 (GDTVVIDFVG…VNEVKAKEVP (86 aa)).

It belongs to the FKBP-type PPIase family. Tig subfamily.

It is found in the cytoplasm. The catalysed reaction is [protein]-peptidylproline (omega=180) = [protein]-peptidylproline (omega=0). Its function is as follows. Involved in protein export. Acts as a chaperone by maintaining the newly synthesized protein in an open conformation. Functions as a peptidyl-prolyl cis-trans isomerase. The polypeptide is Trigger factor (Streptococcus thermophilus (strain CNRZ 1066)).